The chain runs to 728 residues: Beta-galactosidase 12 (728 aa).

The signal sequence occupies residues 1–27 (MGLNFREKAWILLGILCCSSLICSVKA). Glu185 acts as the Proton donor in catalysis. Glu254 acts as the Nucleophile in catalysis. N-linked (GlcNAc...) asparagine glycans are attached at residues Asn255, Asn380, and Asn450.

This sequence belongs to the glycosyl hydrolase 35 family. In terms of tissue distribution, ubiquitous, with higher expression levels in roots and siliques.

Its subcellular location is the secreted. The protein localises to the extracellular space. It localises to the apoplast. The enzyme catalyses Hydrolysis of terminal non-reducing beta-D-galactose residues in beta-D-galactosides.. This is Beta-galactosidase 12 (BGAL12) from Arabidopsis thaliana (Mouse-ear cress).